A 102-amino-acid polypeptide reads, in one-letter code: Large ribosomal subunit protein bL21 (102 aa).

Belongs to the bacterial ribosomal protein bL21 family. As to quaternary structure, part of the 50S ribosomal subunit. Contacts protein L20.

Its function is as follows. This protein binds to 23S rRNA in the presence of protein L20. The protein is Large ribosomal subunit protein bL21 of Stenotrophomonas maltophilia (strain K279a).